The primary structure comprises 467 residues: Chromosomal replication initiator protein DnaA (467 aa).

A domain I, interacts with DnaA modulators region spans residues 1–90 (MSLSLWQQCL…KPVTQTPQAA (90 aa)). The segment at 91-130 (VTSNVAAPALVAQTQPQRAAPSTRSGWDNVPAPAEPTYRS) is domain II. The segment at 131-347 (NVNVKHTFDN…GALNRVIANA (217 aa)) is domain III, AAA+ region. ATP is bound by residues Gly175, Gly177, Lys178, and Thr179. The segment at 348 to 467 (NFTGRAITID…FSNLIRTLSS (120 aa)) is domain IV, binds dsDNA.

The protein belongs to the DnaA family. As to quaternary structure, oligomerizes as a right-handed, spiral filament on DNA at oriC.

It localises to the cytoplasm. In terms of biological role, plays an essential role in the initiation and regulation of chromosomal replication. ATP-DnaA binds to the origin of replication (oriC) to initiate formation of the DNA replication initiation complex once per cell cycle. Binds the DnaA box (a 9 base pair repeat at the origin) and separates the double-stranded (ds)DNA. Forms a right-handed helical filament on oriC DNA; dsDNA binds to the exterior of the filament while single-stranded (ss)DNA is stabiized in the filament's interior. The ATP-DnaA-oriC complex binds and stabilizes one strand of the AT-rich DNA unwinding element (DUE), permitting loading of DNA polymerase. After initiation quickly degrades to an ADP-DnaA complex that is not apt for DNA replication. Binds acidic phospholipids. The protein is Chromosomal replication initiator protein DnaA of Shigella dysenteriae serotype 1 (strain Sd197).